The primary structure comprises 45 residues: Pyruvate dehydrogenase E1 component (45 aa).

As to quaternary structure, homodimer. Thiamine diphosphate serves as cofactor.

It carries out the reaction N(6)-[(R)-lipoyl]-L-lysyl-[protein] + pyruvate + H(+) = N(6)-[(R)-S(8)-acetyldihydrolipoyl]-L-lysyl-[protein] + CO2. The pyruvate dehydrogenase complex catalyzes the overall conversion of pyruvate to acetyl-CoA and CO(2). It contains multiple copies of three enzymatic components: pyruvate dehydrogenase (E1), dihydrolipoamide acetyltransferase (E2) and lipoamide dehydrogenase (E3). This chain is Pyruvate dehydrogenase E1 component, found in Azotobacter vinelandii.